The primary structure comprises 245 residues: Pre-hexon-linking protein VIII (245 aa).

The propeptide occupies 116 to 167; it reads LMVGRTEGRMQLAGGLTEGRVQLSGGFHGRPLVRGRSRRPPRWCGAELTGNG.

It belongs to the adenoviridae hexon-linking protein family. In terms of assembly, interacts with the peripentonal hexons as well as the hexons in the facets. Part of a complex composed of the core-capsid bridging protein, the endosome lysis protein VI and the hexon-linking protein VIII; these interactions bridge the virus core to the capsid. Post-translationally, cleaved by the viral protease during virion maturation. May cause the middle segment to be shed from the capsid.

It localises to the virion. The protein resides in the host nucleus. Functionally, structural component of the virion that acts as a cement protein on the capsid interior and which glue the peripentonal hexons and group-of-nine hexons together. The chain is Pre-hexon-linking protein VIII from Galliformes (FAdV-1).